A 62-amino-acid polypeptide reads, in one-letter code: Cobrotoxin II (62 aa).

Positions 1 to 16 are enriched in polar residues; it reads LECHNQQSSQTPTTTG. The segment at 1-23 is disordered; it reads LECHNQQSSQTPTTTGCSGGENN. 4 disulfides stabilise this stretch: Cys3–Cys24, Cys17–Cys41, Cys43–Cys54, and Cys55–Cys60.

Belongs to the three-finger toxin family. Short-chain subfamily. Type I alpha-neurotoxin sub-subfamily. In terms of tissue distribution, expressed by the venom gland.

Its subcellular location is the secreted. In terms of biological role, binds to muscle nicotinic acetylcholine receptor (nAChR) and inhibit acetylcholine from binding to the receptor, thereby impairing neuromuscular transmission. This chain is Cobrotoxin II, found in Naja kaouthia (Monocled cobra).